The chain runs to 300 residues: Acetylglutamate kinase (300 aa).

Substrate is bound by residues 73-74 (GG), arginine 95, and asparagine 197.

This sequence belongs to the acetylglutamate kinase family. ArgB subfamily.

The protein localises to the cytoplasm. The catalysed reaction is N-acetyl-L-glutamate + ATP = N-acetyl-L-glutamyl 5-phosphate + ADP. The protein operates within amino-acid biosynthesis; L-arginine biosynthesis; N(2)-acetyl-L-ornithine from L-glutamate: step 2/4. Catalyzes the ATP-dependent phosphorylation of N-acetyl-L-glutamate. This Bordetella bronchiseptica (strain ATCC BAA-588 / NCTC 13252 / RB50) (Alcaligenes bronchisepticus) protein is Acetylglutamate kinase.